A 243-amino-acid polypeptide reads, in one-letter code: tRNA pseudouridine synthase A (243 aa).

D51 serves as the catalytic Nucleophile. Substrate is bound at residue Y111.

This sequence belongs to the tRNA pseudouridine synthase TruA family. As to quaternary structure, homodimer.

It catalyses the reaction uridine(38/39/40) in tRNA = pseudouridine(38/39/40) in tRNA. In terms of biological role, formation of pseudouridine at positions 38, 39 and 40 in the anticodon stem and loop of transfer RNAs. The protein is tRNA pseudouridine synthase A of Neorickettsia sennetsu (strain ATCC VR-367 / Miyayama) (Ehrlichia sennetsu).